Here is a 483-residue protein sequence, read N- to C-terminus: Regulatory protein ViaA (483 aa).

This sequence belongs to the ViaA family. As to quaternary structure, homodimer. Interacts with RavA.

It localises to the cytoplasm. In terms of biological role, component of the RavA-ViaA chaperone complex, which may act on the membrane to optimize the function of some of the respiratory chains. ViaA stimulates the ATPase activity of RavA. The sequence is that of Regulatory protein ViaA from Escherichia coli O81 (strain ED1a).